The chain runs to 420 residues: UDP-N-acetylglucosamine 1-carboxyvinyltransferase (420 aa).

22-23 (KN) contributes to the phosphoenolpyruvate binding site. Residue R91 coordinates UDP-N-acetyl-alpha-D-glucosamine. C115 (proton donor) is an active-site residue. Position 115 is a 2-(S-cysteinyl)pyruvic acid O-phosphothioketal (C115). UDP-N-acetyl-alpha-D-glucosamine contacts are provided by residues 120-124 (RPVDL), 160-163 (KVSV), D305, and I327.

The protein belongs to the EPSP synthase family. MurA subfamily.

It localises to the cytoplasm. It catalyses the reaction phosphoenolpyruvate + UDP-N-acetyl-alpha-D-glucosamine = UDP-N-acetyl-3-O-(1-carboxyvinyl)-alpha-D-glucosamine + phosphate. It participates in cell wall biogenesis; peptidoglycan biosynthesis. Functionally, cell wall formation. Adds enolpyruvyl to UDP-N-acetylglucosamine. This Pectobacterium carotovorum subsp. carotovorum (strain PC1) protein is UDP-N-acetylglucosamine 1-carboxyvinyltransferase.